The chain runs to 137 residues: Large ribosomal subunit protein uL16 (137 aa).

The protein belongs to the universal ribosomal protein uL16 family. Part of the 50S ribosomal subunit.

Its function is as follows. Binds 23S rRNA and is also seen to make contacts with the A and possibly P site tRNAs. The protein is Large ribosomal subunit protein uL16 of Streptococcus pyogenes serotype M1.